A 427-amino-acid chain; its full sequence is Serine hydroxymethyltransferase (427 aa).

(6S)-5,6,7,8-tetrahydrofolate is bound at residue 120 to 122; it reads GHI. Lysine 226 bears the N6-(pyridoxal phosphate)lysine mark.

It belongs to the SHMT family. As to quaternary structure, homodimer. The cofactor is pyridoxal 5'-phosphate.

Its subcellular location is the cytoplasm. Its pathway is amino-acid biosynthesis; glycine biosynthesis; glycine from L-serine: step 1/1. Its function is as follows. Catalyzes the reversible interconversion of serine and glycine with a modified folate serving as the one-carbon carrier. Also exhibits a pteridine-independent aldolase activity toward beta-hydroxyamino acids, producing glycine and aldehydes, via a retro-aldol mechanism. This chain is Serine hydroxymethyltransferase, found in Pyrococcus furiosus (strain ATCC 43587 / DSM 3638 / JCM 8422 / Vc1).